The primary structure comprises 188 residues: Elongation factor P (188 aa).

It belongs to the elongation factor P family.

It localises to the cytoplasm. It participates in protein biosynthesis; polypeptide chain elongation. Involved in peptide bond synthesis. Stimulates efficient translation and peptide-bond synthesis on native or reconstituted 70S ribosomes in vitro. Probably functions indirectly by altering the affinity of the ribosome for aminoacyl-tRNA, thus increasing their reactivity as acceptors for peptidyl transferase. The chain is Elongation factor P from Caulobacter sp. (strain K31).